A 1074-amino-acid chain; its full sequence is Insulin receptor substrate 2-A (1074 aa).

Residues 1-64 are disordered; it reads MAGVLCPTEE…PPASAAEDDV (64 aa). 2 short sequence motifs (YXXM motif) span residues 33-36 and 145-148; these read YRRM and YFAM. The PH domain maps to 63 to 168; sequence DVRKRGYLRK…WYQALSELIN (106 aa). An IRS-type PTB domain is found at 193–297; the sequence is FKEVWQVNVK…DTMKALKAYS (105 aa). Disordered regions lie at residues 326–370, 426–461, and 475–510; these read PPSQ…RPFR, CSSSGHGSASETLTRPSSSSVCGSPSDGGFISSDEY, and SNTPDSLGNTPPIQEENTLSDYMSMSTHSQPDSRDD. The segment covering 347–361 has biased composition (polar residues); that stretch reads SAKNNSFRFRTSSEG. Low complexity-rich tracts occupy residues 426 to 435 and 442 to 454; these read CSSSGHGSAS and SSSSVCGSPSDGG. The segment covering 475–504 has biased composition (polar residues); it reads SNTPDSLGNTPPIQEENTLSDYMSMSTHSQ. 6 consecutive short sequence motifs (YXXM motif) follow at residues 496–499, 592–595, 605–608, 631–634, 663–666, and 710–713; these read YMSM, YMPM, YLPM, YMMM, YMDM, and YVPM. The tract at residues 801–821 is disordered; the sequence is TPYSLSADGSPSSLGSSCDHR. A compositionally biased stretch (low complexity) spans 804–817; it reads SLSADGSPSSLGSS. Residues 888-891 carry the YXXM motif 9 motif; the sequence is YTTM.

Phosphorylated by INSR.

Potentiates insulin signaling. The polypeptide is Insulin receptor substrate 2-A (irs2-a) (Xenopus laevis (African clawed frog)).